Here is a 243-residue protein sequence, read N- to C-terminus: Mesoderm posterior protein 1 (243 aa).

Positions 1–86 are disordered; the sequence is MAQPLCEPRS…QRQSASEREK (86 aa). The span at 27–36 shows a compositional bias: polar residues; sequence DGNSVCSPAW. In terms of domain architecture, bHLH spans 76 to 130; the sequence is GQRQSASEREKLRMRTLARALHELRRFLPPSVAPTGQNLTKIETLRLAIRYIGHL. The CPLCP motif lies at 153–157; it reads CPLCP. The disordered stretch occupies residues 204–228; the sequence is AETASQERQEMEPSPSSPLFSSDML.

No expression was detected in adult tissues except the testis. Expression in the testis was regulated developmentally; expressed 2 weeks after birth, and increases, reaching the full expression level in mature testes.

It localises to the nucleus. In terms of biological role, transcription factor. Plays a role in the epithelialization of somitic mesoderm and in the development of cardiac mesoderm. Defines the rostrocaudal patterning of the somites by participating in distinct Notch pathways. In Mus musculus (Mouse), this protein is Mesoderm posterior protein 1 (Mesp1).